We begin with the raw amino-acid sequence, 629 residues long: Phosphomethylpyrimidine synthase (629 aa).

Positions 1 to 20 (MSTTLKNAAHLSESAQVDSG) are disordered. Residues N233, M262, Y291, H327, 347–349 (SRG), 388–391 (DGLR), and E427 contribute to the substrate site. H431 provides a ligand contact to Zn(2+). A substrate-binding site is contributed by Y454. Position 495 (H495) interacts with Zn(2+). [4Fe-4S] cluster-binding residues include C575, C578, and C583.

Belongs to the ThiC family. Homodimer. [4Fe-4S] cluster is required as a cofactor.

It carries out the reaction 5-amino-1-(5-phospho-beta-D-ribosyl)imidazole + S-adenosyl-L-methionine = 4-amino-2-methyl-5-(phosphooxymethyl)pyrimidine + CO + 5'-deoxyadenosine + formate + L-methionine + 3 H(+). Its pathway is cofactor biosynthesis; thiamine diphosphate biosynthesis. Its function is as follows. Catalyzes the synthesis of the hydroxymethylpyrimidine phosphate (HMP-P) moiety of thiamine from aminoimidazole ribotide (AIR) in a radical S-adenosyl-L-methionine (SAM)-dependent reaction. The chain is Phosphomethylpyrimidine synthase from Pseudomonas savastanoi pv. phaseolicola (strain 1448A / Race 6) (Pseudomonas syringae pv. phaseolicola (strain 1448A / Race 6)).